Here is a 675-residue protein sequence, read N- to C-terminus: DNA ligase (675 aa).

NAD(+)-binding positions include 34–38, 83–84, and Glu116; these read DAEYD and SL. Residue Lys118 is the N6-AMP-lysine intermediate of the active site. The NAD(+) site is built by Arg139, Glu176, Lys293, and Lys317. Zn(2+) contacts are provided by Cys411, Cys414, Cys429, and Cys435. The 82-residue stretch at 594 to 675 folds into the BRCT domain; it reads AGENPFKGKT…FLAIVNAYKR (82 aa).

Belongs to the NAD-dependent DNA ligase family. LigA subfamily. Requires Mg(2+) as cofactor. Mn(2+) is required as a cofactor.

The enzyme catalyses NAD(+) + (deoxyribonucleotide)n-3'-hydroxyl + 5'-phospho-(deoxyribonucleotide)m = (deoxyribonucleotide)n+m + AMP + beta-nicotinamide D-nucleotide.. Functionally, DNA ligase that catalyzes the formation of phosphodiester linkages between 5'-phosphoryl and 3'-hydroxyl groups in double-stranded DNA using NAD as a coenzyme and as the energy source for the reaction. It is essential for DNA replication and repair of damaged DNA. This Mannheimia succiniciproducens (strain KCTC 0769BP / MBEL55E) protein is DNA ligase.